The primary structure comprises 211 residues: MVIMGNELQLENKILKGTTTVGIKVNDGVVLAADRRASAGFFVANKMVRKVLYITDKIGITTAGSVADLQFIYDVLKNIYHYNSITKYGPISIKGIATRLANVLSATKYFPYIVQILIGGYDDQPRLFNLDYLGDITEENYVATGSGSPVAMGVLEDEYNPKMTLDEAADLAKRAVFSAIKRDSFTGTGVIVAKIHSKGHEELEFYLNKKV.

A propeptide spans 1–17 (removed in mature form; by autocatalysis); sequence MVIMGNELQLENKILKG. Catalysis depends on T18, which acts as the Nucleophile.

Belongs to the peptidase T1B family. As to quaternary structure, the 20S proteasome core is composed of 14 alpha and 14 beta subunits that assemble into four stacked heptameric rings, resulting in a barrel-shaped structure. The two inner rings, each composed of seven catalytic beta subunits, are sandwiched by two outer rings, each composed of seven alpha subunits. The catalytic chamber with the active sites is on the inside of the barrel. Has a gated structure, the ends of the cylinder being occluded by the N-termini of the alpha-subunits. Is capped at one or both ends by the proteasome regulatory ATPase, PAN.

The protein localises to the cytoplasm. The enzyme catalyses Cleavage of peptide bonds with very broad specificity.. The formation of the proteasomal ATPase PAN-20S proteasome complex, via the docking of the C-termini of PAN into the intersubunit pockets in the alpha-rings, triggers opening of the gate for substrate entry. Interconversion between the open-gate and close-gate conformations leads to a dynamic regulation of the 20S proteasome proteolysis activity. In terms of biological role, component of the proteasome core, a large protease complex with broad specificity involved in protein degradation. The protein is Proteasome subunit beta 1 of Saccharolobus islandicus (strain M.16.27) (Sulfolobus islandicus).